Reading from the N-terminus, the 183-residue chain is Oligoribonuclease (183 aa).

The 164-residue stretch at 8 to 171 folds into the Exonuclease domain; it reads LIWIDLEMTG…DDIRDSIHEL (164 aa). Y129 is an active-site residue.

The protein belongs to the oligoribonuclease family.

Its subcellular location is the cytoplasm. 3'-to-5' exoribonuclease specific for small oligoribonucleotides. This is Oligoribonuclease from Halorhodospira halophila (strain DSM 244 / SL1) (Ectothiorhodospira halophila (strain DSM 244 / SL1)).